The following is a 268-amino-acid chain: Cytochrome c oxidase subunit 3 (268 aa).

7 consecutive transmembrane segments (helical) span residues 23–43, 49–69, 88–108, 141–161, 166–186, 203–223, and 246–266; these read ILVSFSVMSIMLTLVFNMHGF, WVVFSAIVAIMTMALWFRDII, IGFILFVVSELFFFIAIFWAF, TILLLCSGATLTWSHHALLGG, TLLGLILTIALAVTFMICQYM, VFYFGTGFHGLHIIIGIIMLG, and ILYYHFVDVVWLFLYIVFYWW.

The protein belongs to the cytochrome c oxidase subunit 3 family. In terms of assembly, component of the cytochrome c oxidase (complex IV, CIV), a multisubunit enzyme composed of a catalytic core of 3 subunits and several supernumerary subunits. The complex exists as a monomer or a dimer and forms supercomplexes (SCs) in the inner mitochondrial membrane with ubiquinol-cytochrome c oxidoreductase (cytochrome b-c1 complex, complex III, CIII).

Its subcellular location is the mitochondrion inner membrane. It carries out the reaction 4 Fe(II)-[cytochrome c] + O2 + 8 H(+)(in) = 4 Fe(III)-[cytochrome c] + 2 H2O + 4 H(+)(out). Component of the cytochrome c oxidase, the last enzyme in the mitochondrial electron transport chain which drives oxidative phosphorylation. The respiratory chain contains 3 multisubunit complexes succinate dehydrogenase (complex II, CII), ubiquinol-cytochrome c oxidoreductase (cytochrome b-c1 complex, complex III, CIII) and cytochrome c oxidase (complex IV, CIV), that cooperate to transfer electrons derived from NADH and succinate to molecular oxygen, creating an electrochemical gradient over the inner membrane that drives transmembrane transport and the ATP synthase. Cytochrome c oxidase is the component of the respiratory chain that catalyzes the reduction of oxygen to water. Electrons originating from reduced cytochrome c in the intermembrane space (IMS) are transferred via the dinuclear copper A center (CU(A)) of subunit 2 and heme A of subunit 1 to the active site in subunit 1, a binuclear center (BNC) formed by heme A3 and copper B (CU(B)). The BNC reduces molecular oxygen to 2 water molecules using 4 electrons from cytochrome c in the IMS and 4 protons from the mitochondrial matrix. The protein is Cytochrome c oxidase subunit 3 (COX3) of Yarrowia lipolytica (strain CLIB 122 / E 150) (Yeast).